The chain runs to 402 residues: Imidazolonepropionase (402 aa).

Residues His-66 and His-68 each contribute to the Fe(3+) site. Positions 66 and 68 each coordinate Zn(2+). 3 residues coordinate 4-imidazolone-5-propanoate: Arg-75, Tyr-138, and His-171. Tyr-138 lines the N-formimidoyl-L-glutamate pocket. His-236 provides a ligand contact to Fe(3+). Residue His-236 participates in Zn(2+) binding. Gln-239 is a binding site for 4-imidazolone-5-propanoate. Asp-311 serves as a coordination point for Fe(3+). Asp-311 contacts Zn(2+). Residues Asn-313 and Gly-315 each contribute to the N-formimidoyl-L-glutamate site. Residue Thr-316 participates in 4-imidazolone-5-propanoate binding.

It belongs to the metallo-dependent hydrolases superfamily. HutI family. Zn(2+) serves as cofactor. Requires Fe(3+) as cofactor.

It localises to the cytoplasm. It carries out the reaction 4-imidazolone-5-propanoate + H2O = N-formimidoyl-L-glutamate. It participates in amino-acid degradation; L-histidine degradation into L-glutamate; N-formimidoyl-L-glutamate from L-histidine: step 3/3. In terms of biological role, catalyzes the hydrolytic cleavage of the carbon-nitrogen bond in imidazolone-5-propanoate to yield N-formimidoyl-L-glutamate. It is the third step in the universal histidine degradation pathway. In Pseudomonas paraeruginosa (strain DSM 24068 / PA7) (Pseudomonas aeruginosa (strain PA7)), this protein is Imidazolonepropionase.